The sequence spans 522 residues: Maturase K (522 aa).

Belongs to the intron maturase 2 family. MatK subfamily.

It localises to the plastid. The protein localises to the chloroplast. Functionally, usually encoded in the trnK tRNA gene intron. Probably assists in splicing its own and other chloroplast group II introns. This Iris orientalis (Yellowband iris) protein is Maturase K.